The sequence spans 702 residues: Ferrioxamine B receptor (702 aa).

A signal peptide spans 1-30; the sequence is MPLEMFMFATTRMALLIGGAIGGATFPLFA. Residues 55–168 form the TBDR plug domain; the sequence is PDIETPQSVS…PGGIVALTSR (114 aa). The region spanning 173 to 702 is the TBDR beta-barrel domain; that stretch reads DAGGEVKLFA…SIVGSVSWAF (530 aa).

Belongs to the TonB-dependent receptor family.

Its subcellular location is the cell outer membrane. In terms of biological role, ferrioxamine binding and uptake, in association with the TonB protein. This chain is Ferrioxamine B receptor (foxA), found in Salmonella typhimurium (strain LT2 / SGSC1412 / ATCC 700720).